The primary structure comprises 312 residues: Tyrosine recombinase XerC (312 aa).

Positions 1 to 103 (MIASIYSFLD…SIKSFAHYCV (103 aa)) constitute a Core-binding (CB) domain. The Tyr recombinase domain occupies 124–306 (ELPSPMTYAQ…SVKLKKQTHQ (183 aa)). Active-site residues include arginine 164, lysine 188, histidine 258, arginine 261, and histidine 284. Catalysis depends on tyrosine 293, which acts as the O-(3'-phospho-DNA)-tyrosine intermediate.

The protein belongs to the 'phage' integrase family. XerC subfamily. Forms a cyclic heterotetrameric complex composed of two molecules of XerC and two molecules of XerD.

Its subcellular location is the cytoplasm. Its function is as follows. Site-specific tyrosine recombinase, which acts by catalyzing the cutting and rejoining of the recombining DNA molecules. The XerC-XerD complex is essential to convert dimers of the bacterial chromosome into monomers to permit their segregation at cell division. It also contributes to the segregational stability of plasmids. The sequence is that of Tyrosine recombinase XerC from Chlamydia pneumoniae (Chlamydophila pneumoniae).